Consider the following 600-residue polypeptide: Chaperone protein DnaK (600 aa).

Residue Thr-175 is modified to Phosphothreonine; by autocatalysis. Residues 569 to 578 (SFAQATAQQA) show a composition bias toward low complexity. Residues 569 to 600 (SFAQATAQQANTSESDPKADDSNTIDAEIKQD) are disordered. The span at 583–600 (SDPKADDSNTIDAEIKQD) shows a compositional bias: basic and acidic residues.

This sequence belongs to the heat shock protein 70 family.

Acts as a chaperone. The chain is Chaperone protein DnaK from Mesomycoplasma hyopneumoniae (strain 7448) (Mycoplasma hyopneumoniae).